Here is a 170-residue protein sequence, read N- to C-terminus: Small ribosomal subunit protein bS18c (170 aa).

Residues Met-1–Arg-61 form a disordered region. Residues Gln-13 to Lys-26 show a composition bias toward polar residues. Basic residues predominate over residues Gln-27–Arg-55.

The protein belongs to the bacterial ribosomal protein bS18 family. Part of the 30S ribosomal subunit.

The protein resides in the plastid. The protein localises to the chloroplast. This chain is Small ribosomal subunit protein bS18c, found in Hordeum vulgare (Barley).